Here is a 249-residue protein sequence, read N- to C-terminus: NAD kinase (249 aa).

Asp-45 serves as the catalytic Proton acceptor. Residues 45 to 46, Arg-50, 110 to 111, Asp-138, and 149 to 154 each bind NAD(+); these read DG, NE, and SGWGMS.

The protein belongs to the NAD kinase family. A divalent metal cation is required as a cofactor.

The protein resides in the cytoplasm. The enzyme catalyses NAD(+) + ATP = ADP + NADP(+) + H(+). In terms of biological role, involved in the regulation of the intracellular balance of NAD and NADP, and is a key enzyme in the biosynthesis of NADP. Catalyzes specifically the phosphorylation on 2'-hydroxyl of the adenosine moiety of NAD to yield NADP. The protein is NAD kinase of Saccharolobus islandicus (strain Y.N.15.51 / Yellowstone #2) (Sulfolobus islandicus).